The sequence spans 61 residues: Large ribosomal subunit protein bL32 (61 aa).

The segment covering Met-1–Arg-16 has biased composition (basic residues). The tract at residues Met-1 to Ser-33 is disordered.

This sequence belongs to the bacterial ribosomal protein bL32 family.

The sequence is that of Large ribosomal subunit protein bL32 from Allorhizobium ampelinum (strain ATCC BAA-846 / DSM 112012 / S4) (Agrobacterium vitis (strain S4)).